Reading from the N-terminus, the 470-residue chain is Ribosomal protein uS12 methylthiotransferase RimO (470 aa).

The MTTase N-terminal domain occupies 20-131 (PTVAFAHLGC…IVEVLQQVEA (112 aa)). Residues Cys-29, Cys-65, Cys-94, Cys-169, Cys-173, and Cys-176 each contribute to the [4Fe-4S] cluster site. The Radical SAM core domain occupies 155–384 (TTGEAVAYLK…MTLQQPISAA (230 aa)). Positions 387–458 (ASWIGKTVDV…IYDLSGHVVS (72 aa)) constitute a TRAM domain.

Belongs to the methylthiotransferase family. RimO subfamily. It depends on [4Fe-4S] cluster as a cofactor.

The protein localises to the cytoplasm. It catalyses the reaction L-aspartate(89)-[ribosomal protein uS12]-hydrogen + (sulfur carrier)-SH + AH2 + 2 S-adenosyl-L-methionine = 3-methylsulfanyl-L-aspartate(89)-[ribosomal protein uS12]-hydrogen + (sulfur carrier)-H + 5'-deoxyadenosine + L-methionine + A + S-adenosyl-L-homocysteine + 2 H(+). Functionally, catalyzes the methylthiolation of an aspartic acid residue of ribosomal protein uS12. The chain is Ribosomal protein uS12 methylthiotransferase RimO from Synechococcus sp. (strain CC9311).